The following is a 1382-amino-acid chain: ABC-type transporter atr1 (1382 aa).

Residues 1–12 (MRFRSDSRADHQ) are compositionally biased toward basic and acidic residues. Residues 1 to 56 (MRFRSDSRADHQHPKKQGSMDPDTIQALKYQDRSSSSSSNNKPKEKVGSASTSPSP) are disordered. N-linked (GlcNAc...) asparagine glycosylation is present at Asn-62. Helical transmembrane passes span 101 to 121 (LFGT…NIFI), 159 to 179 (LILL…MAVF), 233 to 253 (LPMA…AFAF), 259 to 279 (LVLL…GALT), 339 to 359 (GVGV…AFFY), and 374 to 394 (IVSV…LFSM). The ABC transmembrane type-1 1 domain maps to 101-400 (LFGTGMAIAA…LFSMIENFTM (300 aa)). Residue Asn-397 is glycosylated (N-linked (GlcNAc...) asparagine). Residues 445-688 (LKLDHVHFAY…PNGTFASMLR (244 aa)) form the ABC transporter 1 domain. 480-487 (GLSGSGKS) contacts ATP. A glycan (N-linked (GlcNAc...) asparagine) is linked at Asn-680. Residues 738 to 768 (SVKPKDPSKNFEPPGESYASPAADGVKQDAP) are disordered. Residues 797–1094 (LGSLCAAIIG…IFNYSADFSS (298 aa)) enclose the ABC transmembrane type-1 2 domain. Residues 800–820 (LCAAIIGAVYPVYAILFGTAI) traverse the membrane as a helical segment. A glycan (N-linked (GlcNAc...) asparagine) is linked at Asn-827. The helical transmembrane segment at 848–868 (ISSGSFFIVAVGCAFISFYHV) threads the bilayer. Asn-903 carries N-linked (GlcNAc...) asparagine glycosylation. 2 consecutive transmembrane segments (helical) span residues 911–931 (SLSV…GSIV) and 951–973 (LALV…LRVL). A glycan (N-linked (GlcNAc...) asparagine) is linked at Asn-1020. 2 helical membrane-spanning segments follow: residues 1034-1054 (VLFG…FWYG) and 1067-1087 (GFFT…NIFN). One can recognise an ABC transporter 2 domain in the interval 1136-1377 (IALKEVTFRY…DGLFALMARL (242 aa)). 1171–1178 (GGSGSGKS) contacts ATP. Asn-1324 carries N-linked (GlcNAc...) asparagine glycosylation.

The protein belongs to the ABC transporter superfamily. ABCB family. Multidrug resistance exporter (TC 3.A.1.201) subfamily.

It is found in the cell membrane. In terms of biological role, ABC-type transporter; part of the gene cluster that mediates the biosynthesis of the glycolipid biosurfactant ustilagic acid (UA). UA is a secreted cellobiose glycolipid that is toxic for many microorganisms and confers biocontrol activity to U.maydis. Export of UA is presumably catalyzed by the ABC transporter atr1. Atr1 appears to be quite unspecific, as many of the UA derivatives produced by cluster mutant strains are readily exported. This Mycosarcoma maydis (Corn smut fungus) protein is ABC-type transporter atr1.